Reading from the N-terminus, the 229-residue chain is Small ribosomal subunit protein uS2c (229 aa).

The protein belongs to the universal ribosomal protein uS2 family.

It localises to the plastid. The protein resides in the chloroplast. In Trieres chinensis (Marine centric diatom), this protein is Small ribosomal subunit protein uS2c (rps2).